A 263-amino-acid chain; its full sequence is tRNA (guanine-N(7)-)-methyltransferase (263 aa).

Polar residues predominate over residues 1–10 (MLPQDPSTEP). The interval 1–38 (MLPQDPSTEPTPADDAAPVDSAGQASAPSPADPEGVAH) is disordered. 4 residues coordinate S-adenosyl-L-methionine: glutamate 91, glutamate 116, aspartate 143, and aspartate 166. Residue aspartate 166 is part of the active site. Residue lysine 170 coordinates substrate. The interval 172–177 (RHNKRR) is interaction with RNA. Substrate-binding positions include aspartate 202 and 240–243 (TKFE).

It belongs to the class I-like SAM-binding methyltransferase superfamily. TrmB family.

It catalyses the reaction guanosine(46) in tRNA + S-adenosyl-L-methionine = N(7)-methylguanosine(46) in tRNA + S-adenosyl-L-homocysteine. It functions in the pathway tRNA modification; N(7)-methylguanine-tRNA biosynthesis. Catalyzes the formation of N(7)-methylguanine at position 46 (m7G46) in tRNA. This is tRNA (guanine-N(7)-)-methyltransferase from Cupriavidus necator (strain ATCC 17699 / DSM 428 / KCTC 22496 / NCIMB 10442 / H16 / Stanier 337) (Ralstonia eutropha).